Here is a 232-residue protein sequence, read N- to C-terminus: Noggin (232 aa).

An N-terminal signal peptide occupies residues 1 to 27; sequence MERCPSLGVTLYALVVVLGLRATPAGG. N-linked (GlcNAc...) asparagine glycosylation is present at asparagine 62. Residues 77 to 96 are disordered; it reads GFMATSPPEDRPGGGGGAAG. 4 cysteine pairs are disulfide-bonded: cysteine 155–cysteine 192, cysteine 178–cysteine 228, cysteine 184–cysteine 230, and cysteine 207–cysteine 215.

It belongs to the noggin family. Homodimer. Interacts with GDF5; inhibits chondrocyte differentiation.

The protein localises to the secreted. Inhibitor of bone morphogenetic proteins (BMP) signaling which is required for growth and patterning of the neural tube and somite. Essential for cartilage morphogenesis and joint formation. Inhibits chondrocyte differentiation through its interaction with GDF5 and, probably, GDF6. The sequence is that of Noggin (NOG) from Homo sapiens (Human).